The following is a 248-amino-acid chain: Probable aquaporin TIP2-2 (248 aa).

A run of 2 helical transmembrane segments spans residues 21-41 and 55-75; these read AYVA…GSAI and AGLV…VAIG. The short motif at 84–86 is the NPA 1 element; that stretch reads NPA. 3 helical membrane-spanning segments follow: residues 87–109, 133–153, and 168–188; these read VTFG…WIAQ, LSGV…FGLV, and LGTI…LVAG. An NPA 2 motif is present at residues 196–198; sequence NPA. A helical transmembrane segment spans residues 210 to 230; sequence YTNIWIYWVGPLVGGGLAGLV.

It belongs to the MIP/aquaporin (TC 1.A.8) family. TIP (TC 1.A.8.10) subfamily. As to expression, expressed in roots and leaves.

It is found in the vacuole membrane. Aquaporins facilitate the transport of water and small neutral solutes across cell membranes. May be involved in transport from the vacuolar compartment to the cytoplasm. The polypeptide is Probable aquaporin TIP2-2 (TIP2-2) (Oryza sativa subsp. japonica (Rice)).